A 187-amino-acid chain; its full sequence is UPF0340 protein SPP_0683 (187 aa).

This sequence belongs to the UPF0340 family.

In Streptococcus pneumoniae (strain P1031), this protein is UPF0340 protein SPP_0683.